Consider the following 151-residue polypeptide: Small ribosomal subunit protein uS15 (151 aa).

This sequence belongs to the universal ribosomal protein uS15 family. In terms of assembly, component of the small ribosomal subunit. Mature ribosomes consist of a small (40S) and a large (60S) subunit. The 40S subunit contains about 32 different proteins and 1 molecule of RNA (18S). The 60S subunit contains 45 different proteins and 3 molecules of RNA (25S, 5.8S and 5S).

The protein localises to the cytoplasm. Component of the ribosome, a large ribonucleoprotein complex responsible for the synthesis of proteins in the cell. The small ribosomal subunit (SSU) binds messenger RNAs (mRNAs) and translates the encoded message by selecting cognate aminoacyl-transfer RNA (tRNA) molecules. The large subunit (LSU) contains the ribosomal catalytic site termed the peptidyl transferase center (PTC), which catalyzes the formation of peptide bonds, thereby polymerizing the amino acids delivered by tRNAs into a polypeptide chain. The nascent polypeptides leave the ribosome through a tunnel in the LSU and interact with protein factors that function in enzymatic processing, targeting, and the membrane insertion of nascent chains at the exit of the ribosomal tunnel. The polypeptide is Small ribosomal subunit protein uS15 (RPS13) (Candida albicans (strain SC5314 / ATCC MYA-2876) (Yeast)).